The sequence spans 204 residues: MRLRISEAVVLFLLGAVAALIGDHSHVVTGTTVYHTDAVPFVWSSPFWFPILVGAATASLAELRLHLPAPRDGVTARQALGGVAAVVGTYVTTALVHAFPVVPVTALVCAAAAITWCVLGDGPGAACGVVIAVIGPAVEIALVQLGVFAYHPDSDGLFGVAPFLAPLYFAFGVVAALLGELAVARRPQLGPPVCDTVSRGPGAG.

The next 5 membrane-spanning stretches (helical) occupy residues 5–27 (ISEAVVLFLLGAVAALIGDHSHV), 47–64 (FWFPILVGAATASLAELR), 76–97 (ARQALGGVAAVVGTYVTTALVH), 101–118 (VVPVTALVCAAAAITWCV), and 124–145 (GAACGVVIAVIGPAVEIALVQL). Histidine 26 contributes to the a 1,2-diacyl-sn-glycerol binding site. An a 1,2-diacyl-sn-glycerol-binding site is contributed by tyrosine 150. The chain crosses the membrane as a helical span at residues 162 to 179 (PFLAPLYFAFGVVAALLG).

Belongs to the INSIG family. Homotrimer.

Its subcellular location is the membrane. In terms of biological role, diacylglycerol-binding protein. The protein is INSIG protein homolog of Mycolicibacterium vanbaalenii (strain DSM 7251 / JCM 13017 / BCRC 16820 / KCTC 9966 / NRRL B-24157 / PYR-1) (Mycobacterium vanbaalenii).